The primary structure comprises 518 residues: Equilibrative nucleoside transporter 4 (518 aa).

The span at 1–10 (MGSKGAERRK) shows a compositional bias: basic and acidic residues. Residues 1–21 (MGSKGAERRKQATPGQTPEGN) form a disordered region. At 1 to 66 (MGSKGAERRK…EEAVPDDRYH (66 aa)) the chain is on the extracellular side. The chain crosses the membrane as a helical span at residues 67–87 (GIYFAMLLAGVGFLLPYNSFI). Topologically, residues 88 to 99 (TDVDYLHHKFEG) are cytoplasmic. The chain crosses the membrane as a helical span at residues 100–120 (TSIVFDMGLTYILVALVAVIL). The Extracellular segment spans residues 121 to 133 (NNVLVEMLSLHTR). A helical transmembrane segment spans residues 134-154 (ITVGYLFALGPLLFVTIFDVW). The Cytoplasmic segment spans residues 155–157 (LER). Residues 158–178 (FTIKQAYVINLMSMGTVAFGC) form a helical membrane-spanning segment. At 179–198 (TVQQSSFYGYMGMLPKRYTQ) the chain is on the extracellular side. The chain crosses the membrane as a helical span at residues 199-218 (GVMTGESTAGVIISLSRIFT). Topologically, residues 219–229 (KLLIKDERKNT) are cytoplasmic. The chain crosses the membrane as a helical span at residues 230-250 (IIFFVISICMVLVCFILHLLV). Residues 251-342 (RRTRFVQYYT…MILHRYVVAR (92 aa)) lie on the Extracellular side of the membrane. Residues 343–363 (VIWTYMLSIAVTYFITLCLFP) form a helical membrane-spanning segment. Over 364–376 (GLESEIKNATLGE) the chain is Cytoplasmic. Residues 377–397 (WLPILIMAIFNISDFVGKILA) traverse the membrane as a helical segment. Residues 398 to 407 (AVPYEWNGTR) lie on the Extracellular side of the membrane. A helical membrane pass occupies residues 408 to 428 (LLFFSCVRVVFIPLFIMCVYP). At 429-439 (AQMPMFSHPAW) the chain is on the cytoplasmic side. A helical membrane pass occupies residues 440-460 (PCIFSLFMGITNGYFGSVPMI). Residues 461–476 (HAAGKVAPEQRELAGN) are Extracellular-facing. A helical transmembrane segment spans residues 477–497 (IMTVSYMSGLMLGSVVAYAAY). Over 498–518 (SFTASGSSFHSQTGYNFTQGY) the chain is Cytoplasmic.

This sequence belongs to the SLC29A/ENT transporter (TC 2.A.57) family.

Its subcellular location is the membrane. In terms of biological role, functions as a polyspecific organic cation transporter, efficiently transporting many organic cations such as monoamine neurotransmitters 1-methyl-4-phenylpyridinium and biogenic amines including serotonin, dopamine, norepinephrine and epinephrine. May play a role in regulating central nervous system homeostasis of monoamine neurotransmitters. May be involved in luminal transport of organic cations in the kidney and seems to use luminal proton gradient to drive organic cation reabsorption. Does not seem to transport nucleoside and nucleoside analogs such as uridine, cytidine, thymidine, adenosine, inosine, guanosine, and azidothymidine. The sequence is that of Equilibrative nucleoside transporter 4 (slc29a4) from Danio rerio (Zebrafish).